The primary structure comprises 391 residues: Xylose isomerase (391 aa).

Active-site residues include His54 and Asp57. Glu181, Glu217, His220, Asp245, Asp255, Asp257, and Asp287 together coordinate Mg(2+).

The protein belongs to the xylose isomerase family. In terms of assembly, homotetramer. Mg(2+) is required as a cofactor.

The protein localises to the cytoplasm. It carries out the reaction alpha-D-xylose = alpha-D-xylulofuranose. In terms of biological role, involved in D-xylose catabolism. The chain is Xylose isomerase (xylA) from Streptomyces albus G.